Reading from the N-terminus, the 91-residue chain is MANHKSAEKRIRQTLKRTERNRYYRTRIKNITKAVKEAVASNDATKAEEALKVANKDLHKFVSKGILPKNTAARKVSRLHASVKKLSAQIA.

Belongs to the bacterial ribosomal protein bS20 family.

Functionally, binds directly to 16S ribosomal RNA. The sequence is that of Small ribosomal subunit protein bS20 from Wolinella succinogenes (strain ATCC 29543 / DSM 1740 / CCUG 13145 / JCM 31913 / LMG 7466 / NCTC 11488 / FDC 602W) (Vibrio succinogenes).